The primary structure comprises 463 residues: Autophagy-related protein 36 (463 aa).

Residues 5–45 (CSICLEVLVDKEAFTEPCLHYYHNECIKEWTKRANTCPKCR) form an RING-type; atypical zinc finger. A PHD-type zinc finger spans residues 85-131 (TNLCALCEDPSTSLIYCESCGGSFHFNCIGIGDELDSEWCCPLCGMF). Residues 229 to 242 (TQNSQSSEFSTENN) show a composition bias toward polar residues. Residues 229–281 (TQNSQSSEFSTENNVVPLKNTHELGRKLKKPRRASGIKKNVVERSSSHQSTQI) form a disordered region. Positions 255 to 264 (KLKKPRRASG) are enriched in basic residues.

Interacts with ATG28.

In terms of biological role, micropexophagy-specific protein required for efficient micropexophagic apparatus (MIPA) formation but not for general autophagy. The chain is Autophagy-related protein 36 (ATG35) from Komagataella phaffii (strain GS115 / ATCC 20864) (Yeast).